We begin with the raw amino-acid sequence, 210 residues long: Large ribosomal subunit protein uL3 (210 aa).

The disordered stretch occupies residues 131–154 (GPMSHGSKYHRRVGSMGATTDPGR).

The protein belongs to the universal ribosomal protein uL3 family. In terms of assembly, part of the 50S ribosomal subunit. Forms a cluster with proteins L14 and L19.

One of the primary rRNA binding proteins, it binds directly near the 3'-end of the 23S rRNA, where it nucleates assembly of the 50S subunit. The sequence is that of Large ribosomal subunit protein uL3 from Thermoanaerobacter pseudethanolicus (strain ATCC 33223 / 39E) (Clostridium thermohydrosulfuricum).